We begin with the raw amino-acid sequence, 783 residues long: Ubiquitin carboxyl-terminal hydrolase 1 (783 aa).

Disordered stretches follow at residues 1–22 (MPGVIPSESNGLSRGSPSKKNR) and 34–55 (KRALDFTDSQENEEKTSEYKGS). A compositionally biased stretch (polar residues) spans 7–16 (SESNGLSRGS). Serine 16 and serine 42 each carry phosphoserine. Residues 45–55 (NEEKTSEYKGS) show a composition bias toward basic and acidic residues. The residue at position 67 (serine 67) is a Phosphoserine. One can recognise a USP domain in the interval 81–783 (VGLNNLGNTC…TPYLLFYKKL (703 aa)). Cysteine 90 acts as the Nucleophile in catalysis. A disordered region spans residues 234–311 (EEYQKEEMSD…RKAAGDTLEI (78 aa)). Basic and acidic residues-rich tracts occupy residues 250–273 (DNMRHSEDYKEKLSKGNGKRKSDA) and 284–296 (ISKEHQSSEENQR). A Phosphoserine modification is found at serine 473. The active-site Proton acceptor is histidine 591. Positions 685 to 722 (PDKVASTALPENRNSETNNTNGTDESDSNKESSDQTGI) are disordered. Serine 766 carries the post-translational modification Phosphoserine.

It belongs to the peptidase C19 family. In terms of assembly, interacts with FANCD2 and PCNA. Interacts with WDR48. Interacts with ATAD5; the interaction regulates USP1-mediated PCNA deubiquitination. Autocatalytic cleavage of USP1 following UV irradiation inactivates it, leading to an increase in ubiquitinated PCNA, recruitment of POLH and translesion synthesis. In terms of processing, ubiquitinated by the CRL2(KLHDC2) complex following autocatalytic cleavage, leading to its degradation: the CRL2(KLHDC2) complex recognizes the diglycine (Gly-Gly) at the C-terminus.

The protein resides in the nucleus. It carries out the reaction Thiol-dependent hydrolysis of ester, thioester, amide, peptide and isopeptide bonds formed by the C-terminal Gly of ubiquitin (a 76-residue protein attached to proteins as an intracellular targeting signal).. Negative regulator of DNA damage repair which specifically deubiquitinates monoubiquitinated FANCD2. Also involved in PCNA-mediated translesion synthesis (TLS) by deubiquitinating monoubiquitinated PCNA. Has almost no deubiquitinating activity by itself and requires the interaction with WDR48 to have a high activity. This is Ubiquitin carboxyl-terminal hydrolase 1 from Bos taurus (Bovine).